We begin with the raw amino-acid sequence, 415 residues long: Camphor 5-monooxygenase (415 aa).

Position 358 (C358) interacts with heme.

This sequence belongs to the cytochrome P450 family. Heme is required as a cofactor.

The protein localises to the cytoplasm. It carries out the reaction 2 reduced [2Fe-2S]-[putidaredoxin] + (1R,4R)-camphor + O2 + 2 H(+) = (1R,4R,5R)-5-hydroxycamphor + 2 oxidized [2Fe-2S]-[putidaredoxin] + H2O. The protein operates within terpene metabolism; (R)-camphor degradation. Involved in a camphor oxidation system. This is Camphor 5-monooxygenase (camC) from Pseudomonas putida (Arthrobacter siderocapsulatus).